A 115-amino-acid chain; its full sequence is Large ribosomal subunit protein bL19 (115 aa).

Belongs to the bacterial ribosomal protein bL19 family.

Functionally, this protein is located at the 30S-50S ribosomal subunit interface and may play a role in the structure and function of the aminoacyl-tRNA binding site. In Streptococcus pyogenes serotype M49 (strain NZ131), this protein is Large ribosomal subunit protein bL19.